The chain runs to 170 residues: 6,7-dimethyl-8-ribityllumazine synthase 2 (170 aa).

Residues Trp25, 59-61, and 83-85 contribute to the 5-amino-6-(D-ribitylamino)uracil site; these read AFE and LVV. Arg91 (proton donor) is an active-site residue. Residue Ser116 coordinates 5-amino-6-(D-ribitylamino)uracil. Residue His130 coordinates (2S)-2-hydroxy-3-oxobutyl phosphate.

Belongs to the DMRL synthase family. In terms of assembly, forms an icosahedral capsid composed of 60 subunits, arranged as a dodecamer of pentamers.

The enzyme catalyses (2S)-2-hydroxy-3-oxobutyl phosphate + 5-amino-6-(D-ribitylamino)uracil = 6,7-dimethyl-8-(1-D-ribityl)lumazine + phosphate + 2 H2O + H(+). Its pathway is cofactor biosynthesis; riboflavin biosynthesis; riboflavin from 2-hydroxy-3-oxobutyl phosphate and 5-amino-6-(D-ribitylamino)uracil: step 1/2. Catalyzes the formation of 6,7-dimethyl-8-ribityllumazine by condensation of 5-amino-6-(D-ribitylamino)uracil with 3,4-dihydroxy-2-butanone 4-phosphate. This is the penultimate step in the biosynthesis of riboflavin. This is 6,7-dimethyl-8-ribityllumazine synthase 2 from Pseudomonas syringae pv. tomato (strain ATCC BAA-871 / DC3000).